The chain runs to 67 residues: Putative antitoxin PF1308 (67 aa).

Belongs to the UPF0165 family.

In terms of biological role, possibly the antitoxin component of a type II toxin-antitoxin (TA) system. This Pyrococcus furiosus (strain ATCC 43587 / DSM 3638 / JCM 8422 / Vc1) protein is Putative antitoxin PF1308.